We begin with the raw amino-acid sequence, 422 residues long: Probable zinc-type alcohol dehydrogenase-like protein L498 (422 aa).

Zn(2+) is bound by residues C108, H129, C160, C163, C166, C174, and C231.

Zn(2+) is required as a cofactor.

The protein localises to the host cytoplasm. It localises to the virion. This Acanthamoeba polyphaga (Amoeba) protein is Probable zinc-type alcohol dehydrogenase-like protein L498.